The sequence spans 2287 residues: Protein Ycf2 (2287 aa).

1641 to 1648 is a binding site for ATP; it reads GSIGTGRS.

The protein belongs to the Ycf2 family.

It is found in the plastid. The protein localises to the chloroplast stroma. Functionally, probable ATPase of unknown function. Its presence in a non-photosynthetic plant (Epifagus virginiana) and experiments in tobacco indicate that it has an essential function which is probably not related to photosynthesis. The polypeptide is Protein Ycf2 (Lepidium virginicum (Virginia pepperweed)).